Here is a 127-residue protein sequence, read N- to C-terminus: Large ribosomal subunit protein bL19 (127 aa).

It belongs to the bacterial ribosomal protein bL19 family.

This protein is located at the 30S-50S ribosomal subunit interface and may play a role in the structure and function of the aminoacyl-tRNA binding site. This chain is Large ribosomal subunit protein bL19, found in Myxococcus xanthus (strain DK1622).